Reading from the N-terminus, the 54-residue chain is Large ribosomal subunit protein bL33 (54 aa).

This sequence belongs to the bacterial ribosomal protein bL33 family.

In Chloroflexus aggregans (strain MD-66 / DSM 9485), this protein is Large ribosomal subunit protein bL33.